Reading from the N-terminus, the 235-residue chain is Rab-like protein 3 (235 aa).

The segment at 1-235 (MASLDRVKVL…GGNFKSLHYD (235 aa)) is small GTPase-like. Residues 16-21 (GVGKSS), 148-150 (KLD), and 179-180 (DC) contribute to the GTP site.

This sequence belongs to the small GTPase superfamily. Rab family. Homodimer.

Functionally, required for KRAS signaling regulation and modulation of cell proliferation. Regulator of KRAS prenylation, and probably prenylation of other small GTPases. Required for lymphocyte development and function. Not required for myeloid cell development. The sequence is that of Rab-like protein 3 (rabl3) from Xenopus tropicalis (Western clawed frog).